We begin with the raw amino-acid sequence, 442 residues long: O-methyltransferase pgmB (442 aa).

An S-adenosyl-L-methionine-binding site is contributed by Asp291. The active-site Proton acceptor is the His341.

The protein belongs to the class I-like SAM-binding methyltransferase superfamily. Cation-independent O-methyltransferase family.

Its pathway is pigment biosynthesis. The protein operates within secondary metabolite biosynthesis. Its function is as follows. O-methyltransferase; part of the gene cluster that mediates the biosynthesis of pleosporalin A, ascomycone A, as well as a third cryptic naphthoquinone derived pigment, all responsible for the coloration of conidia. Specifically methylates position C-6 of the pgmA product 3-acetonyl-1,6,8-trihydroxy-2-naphthaldehyde to yield fusarubinaldehyde. The pathway begins with the biosynthesis of the cyclized heptaketide 3-acetonyl-1,6,8-trihydroxy-2-naphthaldehyde by the NR-PKS pgmA. The C-6 hydroxyl group is further methylated by the O-methyltransferase pgmB to yield fusarubinaldehyde which is in turn oxidized by the cytochrome P450 monooxygenase pgmC at C-9. The C-1 hydroxyl group is then methylated spontaneously. Although pgmE, pgmD and pgmH are essential for the production of pleosporalin A, it is not the case for the 2 other final products and it remains difficult to assign a specific function to each enzyme. PgmF and pgmG seem not to be involved in pigment biosynthesis although they were regulated by the cluster-specific transcription factor pgmR. The sequence is that of O-methyltransferase pgmB from Aspergillus terreus.